Here is a 328-residue protein sequence, read N- to C-terminus: Delta(3,5)-Delta(2,4)-dienoyl-CoA isomerase, mitochondrial (328 aa).

The transit peptide at 1–26 (MAAGIVASRRLRDLLTRRLTASNYPG) directs the protein to the mitochondrion. Substrate contacts are provided by residues 116 to 120 (AGVDL) and Gly-174. An N6-succinyllysine modification is found at Lys-231. Residue Ser-268 is modified to Phosphoserine. Residues 326-328 (SKL) carry the Microbody targeting signal motif. N6-acetyllysine is present on Lys-327.

It belongs to the enoyl-CoA hydratase/isomerase family. Homohexamer.

It localises to the mitochondrion. The protein localises to the peroxisome. The enzyme catalyses (3E,5Z)-octadienoyl-CoA = (2E,4E)-octadienoyl-CoA. It carries out the reaction (3E,5Z,8Z,11Z,14Z)-eicosapentaenoyl-CoA = (2E,4E,8Z,11Z,14Z)-eicosapentaenoyl-CoA. The protein operates within lipid metabolism; fatty acid beta-oxidation. Its function is as follows. Isomerization of 3-trans,5-cis-dienoyl-CoA to 2-trans,4-trans-dienoyl-CoA. This chain is Delta(3,5)-Delta(2,4)-dienoyl-CoA isomerase, mitochondrial (ECH1), found in Pongo abelii (Sumatran orangutan).